Reading from the N-terminus, the 293-residue chain is Protease HtpX (293 aa).

2 helical membrane passes run Ile-4–Leu-24 and Gly-34–Ser-54. His-139 is a binding site for Zn(2+). The active site involves Glu-140. Position 143 (His-143) interacts with Zn(2+). The next 2 membrane-spanning stretches (helical) occupy residues Val-158–Met-178 and Leu-193–Ile-213. Glu-222 contributes to the Zn(2+) binding site.

It belongs to the peptidase M48B family. Zn(2+) serves as cofactor.

Its subcellular location is the cell inner membrane. The protein is Protease HtpX of Escherichia coli (strain ATCC 8739 / DSM 1576 / NBRC 3972 / NCIMB 8545 / WDCM 00012 / Crooks).